The chain runs to 387 residues: Probable tRNA sulfurtransferase (387 aa).

A THUMP domain is found at 67-167; the sequence is SLLKNLFTRL…KEHFLIISES (101 aa). Residues 185–186, 210–211, Arg-269, Gly-287, and Gln-296 contribute to the ATP site; these read LL and TF.

It belongs to the ThiI family.

It is found in the cytoplasm. The enzyme catalyses [ThiI sulfur-carrier protein]-S-sulfanyl-L-cysteine + a uridine in tRNA + 2 reduced [2Fe-2S]-[ferredoxin] + ATP + H(+) = [ThiI sulfur-carrier protein]-L-cysteine + a 4-thiouridine in tRNA + 2 oxidized [2Fe-2S]-[ferredoxin] + AMP + diphosphate. It carries out the reaction [ThiS sulfur-carrier protein]-C-terminal Gly-Gly-AMP + S-sulfanyl-L-cysteinyl-[cysteine desulfurase] + AH2 = [ThiS sulfur-carrier protein]-C-terminal-Gly-aminoethanethioate + L-cysteinyl-[cysteine desulfurase] + A + AMP + 2 H(+). The protein operates within cofactor biosynthesis; thiamine diphosphate biosynthesis. Functionally, catalyzes the ATP-dependent transfer of a sulfur to tRNA to produce 4-thiouridine in position 8 of tRNAs, which functions as a near-UV photosensor. Also catalyzes the transfer of sulfur to the sulfur carrier protein ThiS, forming ThiS-thiocarboxylate. This is a step in the synthesis of thiazole, in the thiamine biosynthesis pathway. The sulfur is donated as persulfide by IscS. In Mycoplasma pneumoniae (strain ATCC 29342 / M129 / Subtype 1) (Mycoplasmoides pneumoniae), this protein is Probable tRNA sulfurtransferase.